Here is a 590-residue protein sequence, read N- to C-terminus: Aspartate--tRNA ligase (590 aa).

Residue glutamate 174 coordinates L-aspartate. Residues 198–201 (QLMK) are aspartate. Arginine 220 is a binding site for L-aspartate. ATP contacts are provided by residues 220 to 222 (RDE) and glutamine 229. Histidine 443 is a binding site for L-aspartate. Glutamate 484 lines the ATP pocket. Arginine 491 lines the L-aspartate pocket. 536–539 (GLDR) is a binding site for ATP.

This sequence belongs to the class-II aminoacyl-tRNA synthetase family. Type 1 subfamily. In terms of assembly, homodimer.

The protein localises to the cytoplasm. The catalysed reaction is tRNA(Asp) + L-aspartate + ATP = L-aspartyl-tRNA(Asp) + AMP + diphosphate. In terms of biological role, catalyzes the attachment of L-aspartate to tRNA(Asp) in a two-step reaction: L-aspartate is first activated by ATP to form Asp-AMP and then transferred to the acceptor end of tRNA(Asp). The chain is Aspartate--tRNA ligase from Lactococcus lactis subsp. lactis (strain IL1403) (Streptococcus lactis).